The sequence spans 96 residues: Putative pterin-4-alpha-carbinolamine dehydratase (96 aa).

This sequence belongs to the pterin-4-alpha-carbinolamine dehydratase family.

The catalysed reaction is (4aS,6R)-4a-hydroxy-L-erythro-5,6,7,8-tetrahydrobiopterin = (6R)-L-erythro-6,7-dihydrobiopterin + H2O. This Caulobacter sp. (strain K31) protein is Putative pterin-4-alpha-carbinolamine dehydratase.